Here is a 142-residue protein sequence, read N- to C-terminus: Large ribosomal subunit protein uL11 (142 aa).

Belongs to the universal ribosomal protein uL11 family. Part of the ribosomal stalk of the 50S ribosomal subunit. Interacts with L10 and the large rRNA to form the base of the stalk. L10 forms an elongated spine to which L12 dimers bind in a sequential fashion forming a multimeric L10(L12)X complex. In terms of processing, one or more lysine residues are methylated.

In terms of biological role, forms part of the ribosomal stalk which helps the ribosome interact with GTP-bound translation factors. In Edwardsiella ictaluri (strain 93-146), this protein is Large ribosomal subunit protein uL11.